A 150-amino-acid polypeptide reads, in one-letter code: MVTIVPYSHQYLKDICQLIQKDLSEPYSKYVYRYFVHQWPEFSFVALDNDRFIGAVICKQDVHRGTTLRGYIAMLAIVKEYRGQGIATKLTQASLDVMKNRGAQEIVLETEVDNEAAMSFYERLGFCRYKRLYRYYLNGTDAFRYILYPN.

The N-acetyltransferase domain occupies 2-150; it reads VTIVPYSHQY…DAFRYILYPN (149 aa).

The protein belongs to the acetyltransferase family. MAK3 subfamily.

It localises to the cytoplasm. It is found in the nucleus. It catalyses the reaction N-terminal L-methionyl-L-leucyl-[protein] + acetyl-CoA = N-terminal N(alpha)-acetyl-L-methionyl-L-leucyl-[protein] + CoA + H(+). It carries out the reaction N-terminal L-methionyl-L-isoleucyl-[protein] + acetyl-CoA = N-terminal N(alpha)-acetyl-L-methionyl-L-isoleucyl-[protein] + CoA + H(+). The catalysed reaction is N-terminal L-methionyl-L-phenylalanyl-[protein] + acetyl-CoA = N-terminal N(alpha)-acetyl-L-methionyl-L-phenylalanyl-[protein] + CoA + H(+). The enzyme catalyses N-terminal L-methionyl-L-tryptophyl-[protein] + acetyl-CoA = N-terminal N(alpha)-acetyl-L-methionyl-L-tryptophyl-[protein] + CoA + H(+). It catalyses the reaction N-terminal L-methionyl-L-tyrosyl-[protein] + acetyl-CoA = N-terminal N(alpha)-acetyl-L-methionyl-L-tyrosyl-[protein] + CoA + H(+). Functionally, catalytic component of the NatC N-terminal acetyltransferase. The protein is N-alpha-acetyltransferase 30 (naa30) of Schizosaccharomyces pombe (strain 972 / ATCC 24843) (Fission yeast).